Here is a 459-residue protein sequence, read N- to C-terminus: ATP-binding protein Uup-like (459 aa).

Residues 132-350 (FEMEDVSYEI…QQANFWASKA (219 aa)) enclose the ABC transporter domain. 164-171 (GPNGCGKT) contacts ATP. Over residues 357 to 375 (AKKSEPLKEESAVKNDRTS) the composition is skewed to basic and acidic residues. The segment at 357-381 (AKKSEPLKEESAVKNDRTSKPKSVK) is disordered.

It belongs to the ABC transporter superfamily. ABCF family. Uup subfamily.

The protein localises to the cytoplasm. It carries out the reaction ATP + H2O = ADP + phosphate + H(+). Functionally, might play a role in ribosome assembly or function; this is missing the first ABC transporter domain compared to paralogs. The chain is ATP-binding protein Uup-like (uup-B) from Haemophilus influenzae (strain ATCC 51907 / DSM 11121 / KW20 / Rd).